The sequence spans 409 residues: uncharacterized protein (409 aa).

The N-terminal stretch at 1–26 (MKKELLASLVLCLSLSPLVSTNEVFA) is a signal peptide.

This is an uncharacterized protein from Bacillus subtilis (strain 168).